Reading from the N-terminus, the 309-residue chain is HPr kinase/phosphorylase (309 aa).

Active-site residues include histidine 138 and lysine 159. 153–160 contributes to the ATP binding site; the sequence is GDSGIGKS. Serine 160 contributes to the Mg(2+) binding site. The active-site Proton acceptor; for phosphorylation activity. Proton donor; for dephosphorylation activity is aspartate 177. Residues 201 to 210 form an important for the catalytic mechanism of both phosphorylation and dephosphorylation region; it reads LEIRGVGIID. Glutamate 202 serves as a coordination point for Mg(2+). The active site involves arginine 243. The segment at 264 to 269 is important for the catalytic mechanism of dephosphorylation; the sequence is PVKTGR.

The protein belongs to the HPrK/P family. Homohexamer. The cofactor is Mg(2+).

It carries out the reaction [HPr protein]-L-serine + ATP = [HPr protein]-O-phospho-L-serine + ADP + H(+). It catalyses the reaction [HPr protein]-O-phospho-L-serine + phosphate + H(+) = [HPr protein]-L-serine + diphosphate. In terms of biological role, catalyzes the ATP- as well as the pyrophosphate-dependent phosphorylation of a specific serine residue in HPr, a phosphocarrier protein of the phosphoenolpyruvate-dependent sugar phosphotransferase system (PTS). HprK/P also catalyzes the pyrophosphate-producing, inorganic phosphate-dependent dephosphorylation (phosphorolysis) of seryl-phosphorylated HPr (P-Ser-HPr). The two antagonistic activities of HprK/P are regulated by several intracellular metabolites, which change their concentration in response to the absence or presence of rapidly metabolisable carbon sources (glucose, fructose, etc.) in the growth medium. Therefore, by controlling the phosphorylation state of HPr, HPrK/P is a sensor enzyme that plays a major role in the regulation of carbon metabolism and sugar transport: it mediates carbon catabolite repression (CCR), and regulates PTS-catalyzed carbohydrate uptake and inducer exclusion. The protein is HPr kinase/phosphorylase of Streptococcus thermophilus (strain ATCC BAA-250 / LMG 18311).